Consider the following 833-residue polypeptide: Leucine--tRNA ligase (833 aa).

A 'HIGH' region motif is present at residues P41–H52. The 'KMSKS' region motif lies at K610–S614. K613 is an ATP binding site.

It belongs to the class-I aminoacyl-tRNA synthetase family.

The protein resides in the cytoplasm. It carries out the reaction tRNA(Leu) + L-leucine + ATP = L-leucyl-tRNA(Leu) + AMP + diphosphate. In Streptococcus agalactiae serotype Ia (strain ATCC 27591 / A909 / CDC SS700), this protein is Leucine--tRNA ligase.